The sequence spans 233 residues: EEF1A lysine methyltransferase 2 (233 aa).

Belongs to the class I-like SAM-binding methyltransferase superfamily. EFM4 family.

Its subcellular location is the cytoplasm. The protein localises to the nucleus. The catalysed reaction is L-lysyl-[protein] + 3 S-adenosyl-L-methionine = N(6),N(6),N(6)-trimethyl-L-lysyl-[protein] + 3 S-adenosyl-L-homocysteine + 3 H(+). In terms of biological role, protein-lysine methyltransferase that selectively catalyzes the trimethylation of EEF1A at 'Lys-318'. This chain is EEF1A lysine methyltransferase 2, found in Danio rerio (Zebrafish).